A 127-amino-acid chain; its full sequence is Holo-[acyl-carrier-protein] synthase (127 aa).

Mg(2+)-binding residues include aspartate 7 and glutamate 56.

It belongs to the P-Pant transferase superfamily. AcpS family. The cofactor is Mg(2+).

It is found in the cytoplasm. It catalyses the reaction apo-[ACP] + CoA = holo-[ACP] + adenosine 3',5'-bisphosphate + H(+). Its function is as follows. Transfers the 4'-phosphopantetheine moiety from coenzyme A to a Ser of acyl-carrier-protein. The protein is Holo-[acyl-carrier-protein] synthase of Leptospira biflexa serovar Patoc (strain Patoc 1 / Ames).